The sequence spans 360 residues: D-alanine--D-alanine ligase (360 aa).

Positions 146 to 352 (KLCAVQAGIH…FTELIDRLVR (207 aa)) constitute an ATP-grasp domain. Residue 179–234 (KKRFAPPFFVKPANLGSSVGIAKIHSFDELENALDEACRLDVKILVEKAIEGREVE) coordinates ATP. Residues Asp-305, Glu-319, and Asn-321 each contribute to the Mg(2+) site.

The protein belongs to the D-alanine--D-alanine ligase family. Mg(2+) is required as a cofactor. It depends on Mn(2+) as a cofactor.

It localises to the cytoplasm. It carries out the reaction 2 D-alanine + ATP = D-alanyl-D-alanine + ADP + phosphate + H(+). It participates in cell wall biogenesis; peptidoglycan biosynthesis. Functionally, cell wall formation. This Chlorobium phaeobacteroides (strain BS1) protein is D-alanine--D-alanine ligase.